The following is a 122-amino-acid chain: Large ribosomal subunit protein uL14 (122 aa).

It belongs to the universal ribosomal protein uL14 family. Part of the 50S ribosomal subunit. Forms a cluster with proteins L3 and L19. In the 70S ribosome, L14 and L19 interact and together make contacts with the 16S rRNA in bridges B5 and B8.

Functionally, binds to 23S rRNA. Forms part of two intersubunit bridges in the 70S ribosome. The chain is Large ribosomal subunit protein uL14 from Mycoplasma capricolum subsp. capricolum (strain California kid / ATCC 27343 / NCTC 10154).